A 189-amino-acid chain; its full sequence is Holliday junction branch migration complex subunit RuvA (189 aa).

The domain I stretch occupies residues 1–62 (MIVALKGNIE…EEAWSLYGFA (62 aa)). A domain II region spans residues 63–138 (EEAEKRVFDT…FSLSLQEGSK (76 aa)). The interval 138–139 (KA) is flexible linker. The tract at residues 140 to 189 (STPPVFEESRLALESLGFKSELIAKALQNIQATTTQEIIKEALKKLQTLR) is domain III.

The protein belongs to the RuvA family. As to quaternary structure, homotetramer. Forms an RuvA(8)-RuvB(12)-Holliday junction (HJ) complex. HJ DNA is sandwiched between 2 RuvA tetramers; dsDNA enters through RuvA and exits via RuvB. An RuvB hexamer assembles on each DNA strand where it exits the tetramer. Each RuvB hexamer is contacted by two RuvA subunits (via domain III) on 2 adjacent RuvB subunits; this complex drives branch migration. In the full resolvosome a probable DNA-RuvA(4)-RuvB(12)-RuvC(2) complex forms which resolves the HJ.

The protein localises to the cytoplasm. Functionally, the RuvA-RuvB-RuvC complex processes Holliday junction (HJ) DNA during genetic recombination and DNA repair, while the RuvA-RuvB complex plays an important role in the rescue of blocked DNA replication forks via replication fork reversal (RFR). RuvA specifically binds to HJ cruciform DNA, conferring on it an open structure. The RuvB hexamer acts as an ATP-dependent pump, pulling dsDNA into and through the RuvAB complex. HJ branch migration allows RuvC to scan DNA until it finds its consensus sequence, where it cleaves and resolves the cruciform DNA. This is Holliday junction branch migration complex subunit RuvA from Wolinella succinogenes (strain ATCC 29543 / DSM 1740 / CCUG 13145 / JCM 31913 / LMG 7466 / NCTC 11488 / FDC 602W) (Vibrio succinogenes).